A 402-amino-acid chain; its full sequence is Palmitoyltransferase PFA4 (402 aa).

At 1–8 (MAVQLKWP) the chain is on the cytoplasmic side. The helical transmembrane segment at 9-29 (IIGVVIPCVLIAMVAYGSHYF) threads the bilayer. Topologically, residues 30–39 (VFRTNLSRTE) are lumenal. Residues 40-60 (QILYEVYVCIVWLSYYLAIVV) form a helical membrane-spanning segment. Topologically, residues 61–125 (DPGSPPKNFT…GHNNLPHFLR (65 aa)) are cytoplasmic. The 51-residue stretch at 78–128 (RWCKKCQNYKPERSHHCKTCNKCVLKMDHHCPWTYNCVGHNNLPHFLRFVF) folds into the DHHC domain. Residue Cys-108 is the S-palmitoyl cysteine intermediate of the active site. The helical transmembrane segment at 126 to 146 (FVFFLIVGMTYVLFQLGKQVL) threads the bilayer. Over 147–165 (HYYDSSKLPSYLIDKKEMC) the chain is Lumenal. Residues 166–186 (AVIFLLPVTFFVFVSIIILFV) form a helical membrane-spanning segment. The Cytoplasmic portion of the chain corresponds to 187–402 (RCMINLLFRG…LVSKDEISNN (216 aa)).

Belongs to the DHHC palmitoyltransferase family. PFA4 subfamily.

It is found in the endoplasmic reticulum membrane. The enzyme catalyses L-cysteinyl-[protein] + hexadecanoyl-CoA = S-hexadecanoyl-L-cysteinyl-[protein] + CoA. In terms of biological role, mediates the reversible addition of palmitate to target proteins, thereby regulating their membrane association and biological function. The sequence is that of Palmitoyltransferase PFA4 from Debaryomyces hansenii (strain ATCC 36239 / CBS 767 / BCRC 21394 / JCM 1990 / NBRC 0083 / IGC 2968) (Yeast).